The sequence spans 55 residues: MASSTDVRPKITLACEVCKHRNYITKKNRRNDPDRLELKKYCPNCGKHQAHRETR.

The protein belongs to the bacterial ribosomal protein bL33 family.

This is Large ribosomal subunit protein bL33B from Mycolicibacterium paratuberculosis (strain ATCC BAA-968 / K-10) (Mycobacterium paratuberculosis).